The chain runs to 432 residues: Glutamate-1-semialdehyde 2,1-aminomutase 2 (432 aa).

Residue K268 is modified to N6-(pyridoxal phosphate)lysine.

This sequence belongs to the class-III pyridoxal-phosphate-dependent aminotransferase family. HemL subfamily. As to quaternary structure, homodimer. The cofactor is pyridoxal 5'-phosphate.

Its subcellular location is the cytoplasm. It carries out the reaction (S)-4-amino-5-oxopentanoate = 5-aminolevulinate. The protein operates within porphyrin-containing compound metabolism; protoporphyrin-IX biosynthesis; 5-aminolevulinate from L-glutamyl-tRNA(Glu): step 2/2. This Listeria monocytogenes serotype 4b (strain F2365) protein is Glutamate-1-semialdehyde 2,1-aminomutase 2.